Here is a 460-residue protein sequence, read N- to C-terminus: tRNA-2-methylthio-N(6)-dimethylallyladenosine synthase (460 aa).

One can recognise an MTTase N-terminal domain in the interval 23 to 138 (RKVYVHTFGC…LPEMVARAER (116 aa)). [4Fe-4S] cluster is bound by residues cysteine 32, cysteine 68, cysteine 101, cysteine 176, cysteine 180, and cysteine 183. The 233-residue stretch at 162–394 (ARGRPTAFVT…QAAQRRIAAA (233 aa)) folds into the Radical SAM core domain. One can recognise a TRAM domain in the interval 397 to 460 (AAELGKVVEV…GGSSLSGTPA (64 aa)).

Belongs to the methylthiotransferase family. MiaB subfamily. As to quaternary structure, monomer. Requires [4Fe-4S] cluster as cofactor.

It localises to the cytoplasm. It catalyses the reaction N(6)-dimethylallyladenosine(37) in tRNA + (sulfur carrier)-SH + AH2 + 2 S-adenosyl-L-methionine = 2-methylsulfanyl-N(6)-dimethylallyladenosine(37) in tRNA + (sulfur carrier)-H + 5'-deoxyadenosine + L-methionine + A + S-adenosyl-L-homocysteine + 2 H(+). In terms of biological role, catalyzes the methylthiolation of N6-(dimethylallyl)adenosine (i(6)A), leading to the formation of 2-methylthio-N6-(dimethylallyl)adenosine (ms(2)i(6)A) at position 37 in tRNAs that read codons beginning with uridine. The polypeptide is tRNA-2-methylthio-N(6)-dimethylallyladenosine synthase (Anaeromyxobacter sp. (strain Fw109-5)).